Here is a 184-residue protein sequence, read N- to C-terminus: MPVDAWIREEIEIPEGVEVTVEGNTVKVKGPKGELQRELKYPGVQIFTEDGKVVIYKEFPRKKDVAIVRTFKAHINNMIKGVTEGFKYRLKVVYSHFPMTVKVQGDEVVIENFLGEKNPRRAKILPGVTVKVKGSEIEVEGIDKEAVGQTAANIEQATRITKWDRRVFQDGIYIVEKAGKPIKF.

The protein belongs to the universal ribosomal protein uL6 family. Part of the 50S ribosomal subunit.

Functionally, this protein binds to the 23S rRNA, and is important in its secondary structure. It is located near the subunit interface in the base of the L7/L12 stalk, and near the tRNA binding site of the peptidyltransferase center. The chain is Large ribosomal subunit protein uL6 from Thermococcus kodakarensis (strain ATCC BAA-918 / JCM 12380 / KOD1) (Pyrococcus kodakaraensis (strain KOD1)).